Reading from the N-terminus, the 376-residue chain is Putative E3 ubiquitin-protein ligase XBAT34 (376 aa).

ANK repeat units follow at residues 41 to 71 and 77 to 106; these read LGRT…NVNA and NGGT…NPLV. The RING-type zinc finger occupies 325-364; it reads CVICVDAPSEAVCVPCGHVAGCISCLKEIENKKMGCPVCR.

It catalyses the reaction S-ubiquitinyl-[E2 ubiquitin-conjugating enzyme]-L-cysteine + [acceptor protein]-L-lysine = [E2 ubiquitin-conjugating enzyme]-L-cysteine + N(6)-ubiquitinyl-[acceptor protein]-L-lysine.. It participates in protein modification; protein ubiquitination. Its function is as follows. No E3 ubiquitin-protein ligase activity observed when associated with the E2 enzyme UBC8 in vitro. This chain is Putative E3 ubiquitin-protein ligase XBAT34 (XBAT34), found in Arabidopsis thaliana (Mouse-ear cress).